Reading from the N-terminus, the 283-residue chain is GDP-polyphosphate phosphotransferase (283 aa).

The protein belongs to the polyphosphate kinase 2 (PPK2) family. Class I subfamily.

It catalyses the reaction [phosphate](n) + GTP = [phosphate](n+1) + GDP. In terms of biological role, uses inorganic polyphosphate (polyP) as a donor to convert GDP to GTP. The chain is GDP-polyphosphate phosphotransferase from Mycolicibacterium smegmatis (strain ATCC 700084 / mc(2)155) (Mycobacterium smegmatis).